A 210-amino-acid chain; its full sequence is Large ribosomal subunit protein uL3 (210 aa).

The protein belongs to the universal ribosomal protein uL3 family. As to quaternary structure, part of the 50S ribosomal subunit. Forms a cluster with proteins L14 and L19.

In terms of biological role, one of the primary rRNA binding proteins, it binds directly near the 3'-end of the 23S rRNA, where it nucleates assembly of the 50S subunit. The polypeptide is Large ribosomal subunit protein uL3 (Natranaerobius thermophilus (strain ATCC BAA-1301 / DSM 18059 / JW/NM-WN-LF)).